The following is an 867-amino-acid chain: MPQKTKETPMMAQYQKVKDQYPDAFLFYRLGDFYELFNDDAVKASQLLELTLTARNKNAADPIPMCGVPHHAAQNYIDILVDQGYKVAICEQMEDPKTAKGMVKREVVQLVTPGTVMDEKAGHAKQNNYLTAVVAQGDQFGFAYTDLSTGEMKVSQISSLDVLLNEMLSLQTKEVVVNHDVPSEVVQAFVQQQILVSYQDEGADTAEVSFVSQNISQPLALAVIKQLVVYLATTQKRHLGHLQRAQAYEPSQYLKLDHSAKMNLELTASLRTGHKSGTLLWLLDETKTAMGGRLLKQWLERPLLDLNQIKNRQNQVASFLQHYFERTNLQEALTKVYDLERLAGRVAFGSVNGRDLIQLKTSLEQIPKIKDVLTGINETQAFDQALTRLDPVDDVRTLIETAINPDSPISVTDGGIIQDGYDEQLDQYRNAMSNGKQWLAQLEAQEREATGIHNLKIGFNRVFGYYIEVTRANLSSLPEGRYERKQTLTNAERFITPELKEKEQLILEAEERSTALEYELFTQVREQVKLQIERLQTLAKGVAALDVLQSFAVVSESYHYVQPTLRTDSREIDLVDGRHPVVEKVLGRQKYIPNAVQMGKETDMLLITGPNMSGKSTYMRQLALTVIMAQMGCFVPAKSANLPVFDQIFTRIGAADDLISGQSTFMVEMMEANRAIMSATANSLILFDEIGRGTATYDGMALAQAIIEYIHDHVHAKTLFSTHYHELTALADTLTALRNVHVGAVEENGELVFLHKMLAGPADKSYGIHVAKLAGMPETLLQRADVILGQLEDKPKAPVQPATVAPAQPAAAAVEEQMALFEPEVAAPVDKKTDKVVAAIKNFDLMSATPLEALNQLYEWQKQLNKH.

609 to 616 (GPNMSGKS) contributes to the ATP binding site.

Belongs to the DNA mismatch repair MutS family.

This protein is involved in the repair of mismatches in DNA. It is possible that it carries out the mismatch recognition step. This protein has a weak ATPase activity. This chain is DNA mismatch repair protein MutS, found in Latilactobacillus sakei subsp. sakei (strain 23K) (Lactobacillus sakei subsp. sakei).